Consider the following 245-residue polypeptide: Orotidine 5'-phosphate decarboxylase (245 aa).

Substrate contacts are provided by residues aspartate 22, lysine 44, 71 to 80 (DLKFHDIPNT), threonine 131, arginine 192, glutamine 201, glycine 221, and arginine 222. The active-site Proton donor is lysine 73.

It belongs to the OMP decarboxylase family. Type 1 subfamily. In terms of assembly, homodimer.

The enzyme catalyses orotidine 5'-phosphate + H(+) = UMP + CO2. The protein operates within pyrimidine metabolism; UMP biosynthesis via de novo pathway; UMP from orotate: step 2/2. Catalyzes the decarboxylation of orotidine 5'-monophosphate (OMP) to uridine 5'-monophosphate (UMP). The protein is Orotidine 5'-phosphate decarboxylase of Shigella dysenteriae serotype 1 (strain Sd197).